We begin with the raw amino-acid sequence, 192 residues long: dTTP/UTP pyrophosphatase (192 aa).

Residue aspartate 68 is the Proton acceptor of the active site.

It belongs to the Maf family. YhdE subfamily. Requires a divalent metal cation as cofactor.

The protein resides in the cytoplasm. The enzyme catalyses dTTP + H2O = dTMP + diphosphate + H(+). The catalysed reaction is UTP + H2O = UMP + diphosphate + H(+). Functionally, nucleoside triphosphate pyrophosphatase that hydrolyzes dTTP and UTP. May have a dual role in cell division arrest and in preventing the incorporation of modified nucleotides into cellular nucleic acids. In Cereibacter sphaeroides (strain ATCC 17023 / DSM 158 / JCM 6121 / CCUG 31486 / LMG 2827 / NBRC 12203 / NCIMB 8253 / ATH 2.4.1.) (Rhodobacter sphaeroides), this protein is dTTP/UTP pyrophosphatase.